The chain runs to 752 residues: Probable beta-glucosidase D (752 aa).

A signal peptide spans M1–A18. N-linked (GlcNAc...) asparagine glycans are attached at residues N187 and N237. D265 is an active-site residue. Residues N299, N343, N441, N510, N532, N571, N586, N638, N661, and N743 are each glycosylated (N-linked (GlcNAc...) asparagine).

The protein belongs to the glycosyl hydrolase 3 family.

The protein localises to the secreted. It carries out the reaction Hydrolysis of terminal, non-reducing beta-D-glucosyl residues with release of beta-D-glucose.. It functions in the pathway glycan metabolism; cellulose degradation. Its function is as follows. Beta-glucosidases are one of a number of cellulolytic enzymes involved in the degradation of cellulosic biomass. Catalyzes the last step releasing glucose from the inhibitory cellobiose. This Aspergillus flavus (strain ATCC 200026 / FGSC A1120 / IAM 13836 / NRRL 3357 / JCM 12722 / SRRC 167) protein is Probable beta-glucosidase D (bglD).